The chain runs to 575 residues: Carboxylesterase 5A (575 aa).

The N-terminal stretch at 1–20 is a signal peptide; sequence MSGNWVHPGQILIWAIWVLA. The cysteines at positions 94 and 121 are disulfide-linked. Catalysis depends on serine 226, which acts as the Acyl-ester intermediate. An N-linked (GlcNAc...) asparagine glycan is attached at asparagine 281. The active-site Charge relay system is the glutamate 345. The N-linked (GlcNAc...) asparagine glycan is linked to asparagine 363. Histidine 454 (charge relay system) is an active-site residue. Asparagine 513 and asparagine 524 each carry an N-linked (GlcNAc...) asparagine glycan.

It belongs to the type-B carboxylesterase/lipase family. Post-translationally, N-glycosylated.

The protein localises to the secreted. It carries out the reaction a carboxylic ester + H2O = an alcohol + a carboxylate + H(+). Functionally, involved in the detoxification of xenobiotics and in the activation of ester and amide prodrugs. This chain is Carboxylesterase 5A (CES5A), found in Homo sapiens (Human).